The primary structure comprises 404 residues: Serine/threonine transporter SstT (404 aa).

8 consecutive transmembrane segments (helical) span residues 10–30, 53–73, 81–101, 140–160, 177–197, 215–235, 287–307, and 329–349; these read ILGG…ICLA, AIAP…KEVG, ILVM…ILSY, AITN…GIAL, AVSF…FGLV, LLAV…PLLV, IAIP…ITVL, and IVAS…LLLI.

The protein belongs to the dicarboxylate/amino acid:cation symporter (DAACS) (TC 2.A.23) family.

It is found in the cell inner membrane. The catalysed reaction is L-serine(in) + Na(+)(in) = L-serine(out) + Na(+)(out). It catalyses the reaction L-threonine(in) + Na(+)(in) = L-threonine(out) + Na(+)(out). Involved in the import of serine and threonine into the cell, with the concomitant import of sodium (symport system). This chain is Serine/threonine transporter SstT, found in Glaesserella parasuis serovar 5 (strain SH0165) (Haemophilus parasuis).